The chain runs to 692 residues: MAREYPLEKTRNIGIMAHIDAGKTTTTERILFYTGRVHRMGEVHDGNATMDWMIQEQERGITITSAATTCFWRNHRINIIDTPGHVDFTVEVERSLRVLDGAVAVFCSVGGVEPQSETVWRQADKYGVPRIAYINKMDRVGADFFRGVRMIAERLGANPVPIQLPIGAEDSFQGMVDLINMKAIYYTDELGTTLDEEPIPAEMEDLVQEYREKLLEAVAESDEELMIKYLEGEELTPEEIKAGIRKATIAVKMVPVLCGSSFKNKGVQPLLDAIVDFLPAPTDVPAIQGVDPETGDEDERHSSDNEPFAALAFKIMADPYVGKLTFFRVYSGTLKSGSYVYNSTKGRRERIGRILRMHANHREEIDEAYAGDIAAAVGLKETTTGDTLCDEQHPIVLEAMEFPEPVISVAIEPKTKADQEKMSIALQKLAEEDPTFRMYTDQETGQTIISGMGELHLEIIVDRLLREFKVGAKVGRPQVAYKETIRRPVKAEGKFIRQTGGHGQYGHVIIEIEPQEPGKGYEFVNKIVGGVIPKEYIPAVDAGIQEAMANGVLAGYPVVDVRATLVDGSYHEVDSSEMAFKIAGSLAFKDAAKKAQPVLLEPVMRVEVVVPDEYMGDVIGDLNSRRGRVEGMEPRAGAQVIRAHVPLAEMFGYATDLRSRTQGRGTYVMQFDHYEEVPKNIAEEIISKRQGA.

A tr-type G domain is found at E8 to T282. GTP-binding positions include A17 to T24, D81 to H85, and N135 to D138.

The protein belongs to the TRAFAC class translation factor GTPase superfamily. Classic translation factor GTPase family. EF-G/EF-2 subfamily.

It localises to the cytoplasm. In terms of biological role, catalyzes the GTP-dependent ribosomal translocation step during translation elongation. During this step, the ribosome changes from the pre-translocational (PRE) to the post-translocational (POST) state as the newly formed A-site-bound peptidyl-tRNA and P-site-bound deacylated tRNA move to the P and E sites, respectively. Catalyzes the coordinated movement of the two tRNA molecules, the mRNA and conformational changes in the ribosome. The chain is Elongation factor G from Moorella thermoacetica (strain ATCC 39073 / JCM 9320).